Here is a 360-residue protein sequence, read N- to C-terminus: tRNA N6-adenosine threonylcarbamoyltransferase (360 aa).

2 residues coordinate Fe cation: histidine 111 and histidine 115. Substrate is bound by residues 134-138 (LVSGG), aspartate 167, glycine 180, aspartate 184, and asparagine 279. A Fe cation-binding site is contributed by aspartate 307.

It belongs to the KAE1 / TsaD family. Fe(2+) serves as cofactor.

The protein resides in the cytoplasm. It catalyses the reaction L-threonylcarbamoyladenylate + adenosine(37) in tRNA = N(6)-L-threonylcarbamoyladenosine(37) in tRNA + AMP + H(+). Functionally, required for the formation of a threonylcarbamoyl group on adenosine at position 37 (t(6)A37) in tRNAs that read codons beginning with adenine. Is involved in the transfer of the threonylcarbamoyl moiety of threonylcarbamoyl-AMP (TC-AMP) to the N6 group of A37, together with TsaE and TsaB. TsaD likely plays a direct catalytic role in this reaction. This Acaryochloris marina (strain MBIC 11017) protein is tRNA N6-adenosine threonylcarbamoyltransferase.